We begin with the raw amino-acid sequence, 210 residues long: Protein MSO1 (210 aa).

Residue Met1 is modified to N-acetylmethionine. Met2 bears the N-acetylserine mark. Positions 88–210 (KHDMKKQNSR…LKRRNNDYGF (123 aa)) are disordered. Ser102 bears the Phosphoserine mark. The span at 117–141 (TPSSNGNTPEYTPASKSFQDIYNNH) shows a compositional bias: polar residues. Composition is skewed to low complexity over residues 142 to 161 (TSSSSATPRRASSRPTRPSA) and 172 to 183 (SKTSNSFNTSST).

In terms of assembly, interacts physically with SEC1.

In terms of biological role, involved in secretion. Component of the secretory vesicle docking complex. This is Protein MSO1 (MSO1) from Saccharomyces cerevisiae (strain ATCC 204508 / S288c) (Baker's yeast).